We begin with the raw amino-acid sequence, 91 residues long: Small ribosomal subunit protein uS19 (91 aa).

This sequence belongs to the universal ribosomal protein uS19 family.

Protein S19 forms a complex with S13 that binds strongly to the 16S ribosomal RNA. The chain is Small ribosomal subunit protein uS19 from Sulfurimonas denitrificans (strain ATCC 33889 / DSM 1251) (Thiomicrospira denitrificans (strain ATCC 33889 / DSM 1251)).